A 253-amino-acid chain; its full sequence is DnaJ homolog subfamily C member 8 (253 aa).

Alanine 2 carries the N-acetylalanine modification. Residue serine 35 is modified to Phosphoserine. In terms of domain architecture, J spans asparagine 57–glutamine 124. Residue lysine 146 is modified to N6-acetyllysine. Residues glutamate 181 to serine 222 are compositionally biased toward basic and acidic residues. The interval glutamate 181–glutamate 253 is disordered. Short sequence motifs (nuclear localization signal) lie at residues lysine 189–arginine 192 and lysine 203–arginine 206. A Phosphoserine modification is found at serine 222. A compositionally biased stretch (basic residues) spans lysine 231–threonine 240. The tract at residues glycine 232–glutamate 253 is essential for polyglutamine aggregation suppression.

In terms of assembly, interacts with SRPK1. Interacts with HSP70 (HSPA1A or HSPA1B). Ubiquitous.

It is found in the nucleus. Its function is as follows. Suppresses polyglutamine (polyQ) aggregation of ATXN3 in neuronal cells. The polypeptide is DnaJ homolog subfamily C member 8 (DNAJC8) (Homo sapiens (Human)).